Here is a 311-residue protein sequence, read N- to C-terminus: MGSFNTSFEDGFILVGFSDWPQLEPILFVFIFIFYSLTLFGNTIIIALSWLDLRLHTPMYFFLSHLSLLDLCFTTSTVPQLLINLCGVDRTITRGGCVAQLFIYLALGSTECVLLVVMAFDRYAAVCRPLHYMAIMHPHLCQTLAIASWGAGFVNSLIQTGLAMAMPLCGHRLNHFFCEMPVFLKLACADTEGTEAKMFVARVIVVAVPAALILGSYVHIAHAVLRVKSTAGRRKAFGTCGSHLLVVFLFYGSAIYTYLQSIHNYSEREGKFVALFYTIITPILNPLIYTLRNKDVKGALWKVLWRGRDSG.

The Extracellular segment spans residues 1–25 (MGSFNTSFEDGFILVGFSDWPQLEP). An N-linked (GlcNAc...) asparagine glycan is attached at Asn-5. A helical membrane pass occupies residues 26–49 (ILFVFIFIFYSLTLFGNTIIIALS). The Cytoplasmic segment spans residues 50-57 (WLDLRLHT). A helical transmembrane segment spans residues 58–79 (PMYFFLSHLSLLDLCFTTSTVP). The Extracellular segment spans residues 80–100 (QLLINLCGVDRTITRGGCVAQ). A disulfide bridge links Cys-97 with Cys-188. A helical membrane pass occupies residues 101-120 (LFIYLALGSTECVLLVVMAF). Residues 121–139 (DRYAAVCRPLHYMAIMHPH) lie on the Cytoplasmic side of the membrane. Residues 140–158 (LCQTLAIASWGAGFVNSLI) traverse the membrane as a helical segment. Residues 159–194 (QTGLAMAMPLCGHRLNHFFCEMPVFLKLACADTEGT) lie on the Extracellular side of the membrane. Residues 195–218 (EAKMFVARVIVVAVPAALILGSYV) traverse the membrane as a helical segment. The Cytoplasmic portion of the chain corresponds to 219 to 235 (HIAHAVLRVKSTAGRRK). Residues 236-258 (AFGTCGSHLLVVFLFYGSAIYTY) form a helical membrane-spanning segment. Over 259-271 (LQSIHNYSEREGK) the chain is Extracellular. N-linked (GlcNAc...) asparagine glycosylation is present at Asn-264. A helical membrane pass occupies residues 272-291 (FVALFYTIITPILNPLIYTL). At 292-311 (RNKDVKGALWKVLWRGRDSG) the chain is on the cytoplasmic side.

It belongs to the G-protein coupled receptor 1 family.

It localises to the cell membrane. In terms of biological role, odorant receptor. This chain is Olfactory receptor 2Y1 (OR2Y1), found in Homo sapiens (Human).